The chain runs to 232 residues: Vesicle transport through interaction with t-SNAREs homolog 1B (232 aa).

Alanine 2 is subject to N-acetylalanine. 2 interaction with CLINT1 regions span residues 2 to 23 (ATSA…GLHE) and 69 to 73 (APLSF). Residues 2-208 (ATSAASSEHF…SRKVTTNKLL (207 aa)) are Cytoplasmic-facing. Positions 35-98 (MAGTEEKKKL…AKLHREVRST (64 aa)) form a coiled coil. At threonine 103 the chain carries Phosphothreonine. The residue at position 107 (arginine 107) is an Omega-N-methylarginine. At serine 138 the chain carries Phosphoserine. Residues 161 to 198 (SEIIEELGEQRDQLERTKSRLVNTSENLSKSRKILRSM) are a coiled coil. The helical; Anchor for type IV membrane protein transmembrane segment at 209–229 (LSIVILLELAILGGLVYYKFL) threads the bilayer. Residues 230 to 232 (RRH) lie on the Vesicular side of the membrane.

Belongs to the VTI1 family. Forms a SNARE complex with STX7, STX8 and VAMP8 which functions in the homotypic fusion of late endosomes. Component of the SNARE complex composed of STX7, STX8, VAMP7 and VIT1B that is required for heterotypic fusion of late endosomes with lysosomes. May interact with STX17. Interacts with CLINT1.

The protein localises to the early endosome membrane. The protein resides in the late endosome membrane. It localises to the lysosome membrane. Its subcellular location is the cytoplasmic granule. It is found in the recycling endosome membrane. In terms of biological role, V-SNARE that mediates vesicle transport pathways through interactions with t-SNAREs on the target membrane. These interactions are proposed to mediate aspects of the specificity of vesicle trafficking and to promote fusion of the lipid bilayers. May be concerned with increased secretion of cytokines associated with cellular senescence. The polypeptide is Vesicle transport through interaction with t-SNAREs homolog 1B (VTI1B) (Bos taurus (Bovine)).